A 390-amino-acid chain; its full sequence is Phosphoglycerate kinase (390 aa).

Residues 21–23 (DLN), arginine 36, 59–62 (HLGR), arginine 112, and arginine 145 contribute to the substrate site. ATP is bound by residues lysine 196, glutamate 317, and 343 to 346 (GGDT).

Belongs to the phosphoglycerate kinase family. Monomer.

It is found in the cytoplasm. It catalyses the reaction (2R)-3-phosphoglycerate + ATP = (2R)-3-phospho-glyceroyl phosphate + ADP. It participates in carbohydrate degradation; glycolysis; pyruvate from D-glyceraldehyde 3-phosphate: step 2/5. In Cellvibrio japonicus (strain Ueda107) (Pseudomonas fluorescens subsp. cellulosa), this protein is Phosphoglycerate kinase.